The following is a 68-amino-acid chain: MKYLLIKFVRFWQICISPLYPSSCRFYPTCSHYAILSIEKYGAFKGGMKAFWRILRCNPWNKGGIDYP.

It belongs to the UPF0161 family.

Its subcellular location is the cell inner membrane. Could be involved in insertion of integral membrane proteins into the membrane. The sequence is that of Putative membrane protein insertion efficiency factor from Hydrogenobaculum sp. (strain Y04AAS1).